Reading from the N-terminus, the 268-residue chain is Tryptophan synthase alpha chain (268 aa).

Active-site proton acceptor residues include glutamate 49 and aspartate 60.

The protein belongs to the TrpA family. Tetramer of two alpha and two beta chains.

It carries out the reaction (1S,2R)-1-C-(indol-3-yl)glycerol 3-phosphate + L-serine = D-glyceraldehyde 3-phosphate + L-tryptophan + H2O. It functions in the pathway amino-acid biosynthesis; L-tryptophan biosynthesis; L-tryptophan from chorismate: step 5/5. Its function is as follows. The alpha subunit is responsible for the aldol cleavage of indoleglycerol phosphate to indole and glyceraldehyde 3-phosphate. This Pseudomonas aeruginosa (strain ATCC 15692 / DSM 22644 / CIP 104116 / JCM 14847 / LMG 12228 / 1C / PRS 101 / PAO1) protein is Tryptophan synthase alpha chain.